A 317-amino-acid polypeptide reads, in one-letter code: MRAKLLGIVLTTPIAISSFASTETLSFTPDNINADISLGTLSGKTKERVYLAEEGGRKVSQLDWKFNNAAIIKGAINWDLMPQISIGAAGWTTLGSRGGNMVDQDWMDSSNPGTWTDESRHPDTQLNYANEFDLNIKGWLLNEPNYRLGLMAGYQESRYSFTARGGSYIYSSEEGFRDDIGSFPNGERAIGYKQRFKMPYIGLTGSYRYEDFELGGTFKYSGWVEASDNDEHYDPGKRITYRSKVKDQNYYSVSVNAGYYVTPNAKVYVEGTWNRVTNKKGNTSLYDHNDNTSDYSKNGAGIENYNFITTAGLKYTF.

An N-terminal signal peptide occupies residues 1 to 20 (MRAKLLGIVLTTPIAISSFA). At 21–31 (STETLSFTPDN) the chain is on the periplasmic side. The beta stranded transmembrane segment at 32–41 (INADISLGTL) threads the bilayer. Residues 42 to 69 (SGKTKERVYLAEEGGRKVSQLDWKFNNA) lie on the Extracellular side of the membrane. A beta stranded membrane pass occupies residues 70-78 (AIIKGAINW). The Periplasmic portion of the chain corresponds to 79 to 83 (DLMPQ). Residues 84 to 92 (ISIGAAGWT) form a beta stranded membrane-spanning segment. The Extracellular segment spans residues 93–130 (TLGSRGGNMVDQDWMDSSNPGTWTDESRHPDTQLNYAN). Catalysis depends on residues Asp103 and Asp105. A beta stranded transmembrane segment spans residues 131–140 (EFDLNIKGWL). Topologically, residues 141-145 (LNEPN) are periplasmic. Residues 146–156 (YRLGLMAGYQE) form a beta stranded membrane-spanning segment. The Extracellular segment spans residues 157–197 (SRYSFTARGGSYIYSSEEGFRDDIGSFPNGERAIGYKQRFK). Residues 198 to 209 (MPYIGLTGSYRY) form a beta stranded membrane-spanning segment. The Periplasmic portion of the chain corresponds to 210–211 (ED). A beta stranded transmembrane segment spans residues 212–221 (FELGGTFKYS). At 222–250 (GWVEASDNDEHYDPGKRITYRSKVKDQNY) the chain is on the extracellular side. Catalysis depends on residues Asp230 and His232. A beta stranded transmembrane segment spans residues 251–261 (YSVSVNAGYYV). The Periplasmic portion of the chain corresponds to 262–264 (TPN). The beta stranded transmembrane segment at 265–274 (AKVYVEGTWN) threads the bilayer. The Extracellular portion of the chain corresponds to 275-306 (RVTNKKGNTSLYDHNDNTSDYSKNGAGIENYN). A beta stranded transmembrane segment spans residues 307–316 (FITTAGLKYT). A topological domain (periplasmic) is located at residue Phe317.

The protein belongs to the peptidase A26 family. As to quaternary structure, homopentamer.

The protein localises to the cell outer membrane. It carries out the reaction Has a virtual requirement for Arg in the P1 position and a slightly less stringent preference for this residue in the P1' position, which can also contain Lys, Gly or Val.. Its activity is regulated as follows. Inhibited by zinc. Functionally, protease that can cleave T7 RNA polymerase, ferric enterobactin receptor protein (FEP), antimicrobial peptide protamine and other proteins. This protease has a specificity for paired basic residues. The polypeptide is Protease 7 (ompT) (Escherichia coli O157:H7).